The chain runs to 72 residues: Small ribosomal subunit protein bS18 (72 aa).

Belongs to the bacterial ribosomal protein bS18 family. Part of the 30S ribosomal subunit. Forms a tight heterodimer with protein bS6.

Binds as a heterodimer with protein bS6 to the central domain of the 16S rRNA, where it helps stabilize the platform of the 30S subunit. This Aquifex aeolicus (strain VF5) protein is Small ribosomal subunit protein bS18.